Here is a 3418-residue protein sequence, read N- to C-terminus: Breast cancer type 2 susceptibility protein (3418 aa).

Positions 1 to 40 (MPIGSKERPTFFEIFKTRCNKADLGPISLNWFEELSSEAP) are interaction with PALB2. The segment at 37-68 (SEAPPYNSEPAEESEHKNNNYEPNLFKTPQRK) is disordered. At Ser-70 the chain carries Phosphoserine. The tract at residues 358–381 (VEPNDTDPLDSNVANQKPFESGSD) is disordered. A phosphoserine mark is found at Ser-445, Ser-492, and Ser-755. Residues 639-1000 (LHSSVKRSCS…NKWAGLLGPI (362 aa)) are interaction with NPM1. 6 BRCA2 repeats span residues 1002–1036 (NHSF…DIEE), 1212–1246 (NEVG…DIEN), 1421–1455 (FETS…QKPE), 1517–1551 (KEPT…EKEQ), 1664–1698 (IENS…EGIF), and 1837–1871 (FEVG…DSFS). The tract at residues 1003 to 2082 (HSFGGSFRTA…LHKVKGVLEE (1080 aa)) is interaction with RAD51. The interval 1338 to 1781 (GSDSSKNDTV…IEPVLKNVED (444 aa)) is interaction with POLH. A required for stimulation of POLH DNA polymerization activity region spans residues 1410–1595 (TATKTEQNIK…TAAPKCKEMQ (186 aa)). Ser-1970 is modified (phosphoserine). The stretch at 1971 to 2005 (SANTCGIFSTASGKSVQVSDASLQNARQVFSEIED) is one BRCA2 7 repeat. At Thr-2035 the chain carries Phosphothreonine. The stretch at 2051–2085 (NSSAFSGFSTASGKQVSILESSLHKVKGVLEEFDL) is one BRCA2 8 repeat. Ser-2095 is modified (phosphoserine). Residues 2270–2337 (GKRRGEPLIL…EPITCVPFRT (68 aa)) form an interaction with HSF2BP region. Positions 2350–2545 (TAPGQEFLSK…SHKQLYTYGV (196 aa)) are interaction with FANCD2. Residues 2430-2450 (ENRQKQNIDGHGSDDSKNKIN) are disordered. The tract at residues 2481 to 2832 (ITSLQNARDI…QRAYPIQWME (352 aa)) is interaction with SEM1. The Nuclear export signal; masked by interaction with SEM1 motif lies at 2682-2698 (AAKTLVLCVSDIISLSA). At Ser-3291 the chain carries Phosphoserine; by CDK1 and CDK2. Phosphoserine is present on Ser-3319. Thr-3387 carries the post-translational modification Phosphothreonine; by CHEK1 and CHEK2. A disordered region spans residues 3393-3418 (EQESSQASTEECEKNKQDTITTKKYI).

As to quaternary structure, monomer and dimer. Interacts with RAD51; regulates RAD51 recruitment and function at sites of DNA repair. Interacts with WDR16, USP11, DMC1, ROCK2 and NPM1. Interacts with SEM1; the interaction masks a nuclear export signal in BRCA2. Interacts with both nonubiquitinated and monoubiquitinated FANCD2; this complex also includes XRCC3 and phosphorylated FANCG. Part of a BRCA complex containing BRCA1, BRCA2 and PALB2. Component of the homologous recombination repair (HR) complex composed of ERCC5/XPG, BRCA2, PALB2, DSS1 and RAD51. Within the complex, interacts with ERCC5/XPG and PALB2. Interacts directly with PALB2 which may serve as a scaffold for a HR complex containing PALB2, BRCA2, RAD51C, RAD51 and XRCC3. Interacts with BRCA1 only in the presence of PALB2 which serves as the bridging protein. Interacts with POLH; the interaction is direct. Interacts with the TREX-2 complex subunits PCID2 and SEM1. Interacts with HSF2BP and BRME1; the interaction with HSF2BP is direct and allows the formation of a ternary complex. The complex BRME1:HSF2BP:BRCA2 interacts with SPATA22, MEIOB and RAD51. Phosphorylated by ATM upon irradiation-induced DNA damage. Phosphorylation by CHEK1 and CHEK2 regulates interaction with RAD51. Phosphorylation at Ser-3291 by CDK1 and CDK2 is low in S phase when recombination is active, but increases as cells progress towards mitosis; this phosphorylation prevents homologous recombination-dependent repair during S phase and G2 by inhibiting RAD51 binding. In terms of processing, ubiquitinated in the absence of DNA damage; this does not lead to proteasomal degradation. In contrast, ubiquitination in response to DNA damage leads to proteasomal degradation. As to expression, highest levels of expression in breast and thymus, with slightly lower levels in lung, ovary and spleen.

It is found in the nucleus. It localises to the cytoplasm. Its subcellular location is the cytoskeleton. The protein localises to the microtubule organizing center. The protein resides in the centrosome. In terms of biological role, involved in double-strand break repair and/or homologous recombination. Binds RAD51 and potentiates recombinational DNA repair by promoting assembly of RAD51 onto single-stranded DNA (ssDNA). Acts by targeting RAD51 to ssDNA over double-stranded DNA, enabling RAD51 to displace replication protein-A (RPA) from ssDNA and stabilizing RAD51-ssDNA filaments by blocking ATP hydrolysis. Part of a PALB2-scaffolded HR complex containing RAD51C and which is thought to play a role in DNA repair by HR. May participate in S phase checkpoint activation. Binds selectively to ssDNA, and to ssDNA in tailed duplexes and replication fork structures. May play a role in the extension step after strand invasion at replication-dependent DNA double-strand breaks; together with PALB2 is involved in both POLH localization at collapsed replication forks and DNA polymerization activity. In concert with NPM1, regulates centrosome duplication. Interacts with the TREX-2 complex (transcription and export complex 2) subunits PCID2 and SEM1, and is required to prevent R-loop-associated DNA damage and thus transcription-associated genomic instability. Silencing of BRCA2 promotes R-loop accumulation at actively transcribed genes in replicating and non-replicating cells, suggesting that BRCA2 mediates the control of R-loop associated genomic instability, independently of its known role in homologous recombination. This is Breast cancer type 2 susceptibility protein from Homo sapiens (Human).